We begin with the raw amino-acid sequence, 216 residues long: MSQTDILYACVSYKGVCLVEHKIANGNFIDLARRLITKIPPTSKKIYTSENHNFHYISENDLAFLCLCHEKLGVQIPSEFLSDIRQQFIRSYGQSFSQNSPTATYDPFIRVLEERMKYYSNPKSNKMNLVMDQVSEAKGALTDAIEKTIHRGEKIEIIVDKTERLQSESFVFKSNSVALKRKLWWQNKKLAIAIGLVVCILIAVITLALLKYFKVI.

Topologically, residues 1–189 (MSQTDILYAC…KRKLWWQNKK (189 aa)) are cytoplasmic. The Longin domain maps to 6 to 112 (ILYACVSYKG…ATYDPFIRVL (107 aa)). Residues 126 to 186 (KMNLVMDQVS…VALKRKLWWQ (61 aa)) form the v-SNARE coiled-coil homology domain. The helical; Anchor for type IV membrane protein transmembrane segment at 190–210 (LAIAIGLVVCILIAVITLALL) threads the bilayer. The Vesicular segment spans residues 211–216 (KYFKVI).

This sequence belongs to the synaptobrevin family. As to quaternary structure, component of the SNARE complex composed of syn7A, syn8A, vamp7A and vti1A.

The protein localises to the cytoplasmic vesicle. It localises to the secretory vesicle membrane. Its subcellular location is the golgi apparatus. It is found in the trans-Golgi network membrane. The protein resides in the late endosome membrane. The protein localises to the lysosome membrane. It localises to the endoplasmic reticulum membrane. Its subcellular location is the phagosome membrane. Involved in the targeting and/or fusion of transport vesicles to their target membrane during transport of proteins from the early endosome to the lysosome. Required for heterotypic fusion of late endosomes with lysosomes and homotypic lysosomal fusion. Required for calcium regulated lysosomal exocytosis. The sequence is that of Vesicle-associated membrane protein 7A from Dictyostelium discoideum (Social amoeba).